An 813-amino-acid polypeptide reads, in one-letter code: Nuclear pore complex protein 5 (813 aa).

Belongs to the nucleoporin Nup84/Nup107 family. Part of the nuclear pore complex (NPC). May interact with mdf-1.

The protein localises to the nucleus. It localises to the nuclear pore complex. The protein resides in the chromosome. It is found in the centromere. Its subcellular location is the kinetochore. The protein localises to the nucleus membrane. Its function is as follows. Involved in kinetochore assembly and chromosome segregation during embryonic mitosis. Required for the localization of the NDC80 complex member him-10, the chromosomal passenger complex component air-2 and nuclear pore complex proteins npp-23 and npp-15 to kinetochores during metaphase. Required for npp-23 localization to the nuclear envelope during interphase. Recruits mdf-1, a component of the spindle assembly checkpoint, to the nuclear envelope. Appears dispensable for the assembly of the nuclear pore complex and for nuclear protein import. This is Nuclear pore complex protein 5 from Caenorhabditis elegans.